The sequence spans 318 residues: Mitochondrial coenzyme A transporter SLC25A42 (318 aa).

Solcar repeat units lie at residues 31 to 117 (RQVL…YKRI), 129 to 214 (LPPW…LKSL), and 224 to 312 (PYPF…MQIL). Helical transmembrane passes span 33–53 (VLSS…AVAP), 89–109 (LWRG…IQFS), 135–155 (LFAG…LDLV), 186–206 (LYHG…LSFF), 230–250 (MIFG…LDVV), and 293–313 (VKGP…QILL).

The protein belongs to the mitochondrial carrier (TC 2.A.29) family.

It localises to the mitochondrion inner membrane. The catalysed reaction is ADP(out) + CoA(in) = ADP(in) + CoA(out). It carries out the reaction 3'-dephospho-CoA(in) + ADP(out) = 3'-dephospho-CoA(out) + ADP(in). The enzyme catalyses adenosine 3',5'-bisphosphate(in) + ADP(out) = adenosine 3',5'-bisphosphate(out) + ADP(in). It catalyses the reaction AMP(in) + ADP(out) = AMP(out) + ADP(in). The catalysed reaction is dADP(in) + ADP(out) = dADP(out) + ADP(in). It carries out the reaction ADP(in) + ATP(out) = ADP(out) + ATP(in). Mitochondrial carrier mediating the transport of coenzyme A (CoA) in mitochondria in exchange for intramitochondrial (deoxy)adenine nucleotides and adenosine 3',5'-diphosphate. This chain is Mitochondrial coenzyme A transporter SLC25A42 (SLC25A42), found in Homo sapiens (Human).